Consider the following 455-residue polypeptide: MALWGGRFQGETSALFKLFNDSLPVDYRLFEQDVVGSIAWADAIASVGIITATECSDLKKALNDLLVEVNGDPAIILASGAEDIHSFVESALIAKVGDLGKKLHTGRSRNDQVATDLKLWCQSEGAALLARLQSLHAELLALAEREFDAVMPGYTHLQRAQPVTFGHWCLAYVEMYERDISRLADALTRANTCPLGSGALAGTAYKMDRHALAAALNFASPTLNSLDSVSDRDHVVELCSTASISMMHLSRMAEDLIFFNSGEANFISLSDEVTSGSSLMPQKKNPDALELIRGKTGRVYGSLVGILTTMKALPLAYNKDMQEDKEGLFDVVDSWAICLDMAALVLSGLKVNRPNALLAAQQGYANSTELADYLVSKGMPFREAHHVVGEVVVAAIAKQIPLEEFSLAELKTFAAIIEDDVYPNLTIEACLAKRDVLGGTALPQIQQAIAAKKAR.

The protein belongs to the lyase 1 family. Argininosuccinate lyase subfamily.

Its subcellular location is the cytoplasm. It catalyses the reaction 2-(N(omega)-L-arginino)succinate = fumarate + L-arginine. It participates in amino-acid biosynthesis; L-arginine biosynthesis; L-arginine from L-ornithine and carbamoyl phosphate: step 3/3. The polypeptide is Argininosuccinate lyase (Shewanella baltica (strain OS155 / ATCC BAA-1091)).